The chain runs to 931 residues: Chitin synthase 7 (931 aa).

Disordered stretches follow at residues 1–34 (MVRHDPFTNSVSEDSSFTPSVNPSTPYPQSGHYR) and 56–92 (GDVGYGGRSRRHGSWASVNNEDNEELTPLTTGPASSS). Composition is skewed to polar residues over residues 7–28 (FTNSVSEDSSFTPSVNPSTPYP) and 83–92 (PLTTGPASSS). Residue Asn-536 is glycosylated (N-linked (GlcNAc...) asparagine). 3 consecutive transmembrane segments (helical) span residues 573–593 (IFSLIFSWFALANLWLTFSII), 615–635 (INLVFAWVYLAFLMLQLVLAL), and 647–667 (ILTLWVYAFLSFYLIVCSIIL). N-linked (GlcNAc...) asparagine glycosylation is present at Asn-691. A run of 2 helical transmembrane segments spans residues 695 to 715 (GVLVAAIMSTIGIYLIASFLY) and 725 to 745 (FPQYMLLAPSFTNVLNIYAFC). The tract at residues 763-789 (LPAISSSKQKDGETAVVEEQQRSQGEL) is disordered. Asn-819 carries an N-linked (GlcNAc...) asparagine glycan. The helical transmembrane segment at 826-846 (LVVVWLLTNAALAISIQTLNG) threads the bilayer. N-linked (GlcNAc...) asparagine glycans are attached at residues Asn-866 and Asn-874. The helical transmembrane segment at 899–919 (AILWTTFALSMVRFIGCVFYW) threads the bilayer.

This sequence belongs to the chitin synthase family. Class III subfamily.

The protein localises to the cell membrane. It carries out the reaction [(1-&gt;4)-N-acetyl-beta-D-glucosaminyl](n) + UDP-N-acetyl-alpha-D-glucosamine = [(1-&gt;4)-N-acetyl-beta-D-glucosaminyl](n+1) + UDP + H(+). Functionally, polymerizes chitin, a structural polymer of the cell wall and septum, by transferring the sugar moiety of UDP-GlcNAc to the non-reducing end of the growing chitin polymer. In Cryptococcus neoformans var. grubii serotype A (strain H99 / ATCC 208821 / CBS 10515 / FGSC 9487) (Filobasidiella neoformans var. grubii), this protein is Chitin synthase 7.